The chain runs to 791 residues: Centrosomal protein of 89 kDa (791 aa).

A disordered region spans residues 27-203; sequence APKPAVPRTP…HTQQKDVKHS (177 aa). The span at 30 to 45 shows a compositional bias: pro residues; sequence PAVPRTPPPRSPNPSP. Residue Ser50 is modified to Phosphoserine. Residues 50-62 show a composition bias toward low complexity; that stretch reads SALAAAILATTLT. Basic and acidic residues predominate over residues 75 to 89; that stretch reads SRSESDASDIEKDSF. The span at 94 to 107 shows a compositional bias: polar residues; the sequence is ATTSELRLRQSWQN. Residues 137–161 show a composition bias toward basic and acidic residues; it reads RESESTWKDVGDGRDATYTVPHRDQ. Over residues 181–190 the composition is skewed to low complexity; the sequence is SDSSSSSSSS. 3 coiled-coil regions span residues 252 to 291, 370 to 598, and 670 to 737; these read SANQ…TEKA, LLAY…MGKE, and HRLK…SLLQ.

It localises to the cytoplasm. The protein resides in the cytosol. The protein localises to the cytoskeleton. Its subcellular location is the microtubule organizing center. It is found in the centrosome. It localises to the spindle pole. The protein resides in the centriole. The protein localises to the mitochondrion intermembrane space. In terms of biological role, required for ciliogenesis. Also plays a role in mitochondrial metabolism where it may modulate complex IV activity. This Mus musculus (Mouse) protein is Centrosomal protein of 89 kDa (Cep89).